The primary structure comprises 355 residues: MRNVKGLFSYMTKTKSFYISIIVIIFIIFIVNRMGPRNYNYKQIGTEINCVKHKVDEQRYLLFPMITILYKYGLGNQLFEVFSLLGSAQTLNRTAIFNADDDILQSKLDLLQKQVPQVAARIISIPIEIAESTRYLFLPACCHYQFPSLFSCERSKFLVIDGQYFQSFKYFSAIDSLIRKLLKPPIDEEIILKKMIGRKDELRFKNCVHIRRGDYVNDFDHAETSSYFTIRAIDYVHTLHPGLVYLISDDPKWVRKQIAEHLDYHDDVKIMETPINAAIRDLYFSQAHCDSVLITAPSSTFGWWIGYMSKNQSNVYYRDIQETDDMVKYKMVEEDFFPPTWKKLGMSRNGSIISK.

Residues 1–15 (MRNVKGLFSYMTKTK) lie on the Cytoplasmic side of the membrane. A helical; Signal-anchor for type II membrane protein transmembrane segment spans residues 16–36 (SFYISIIVIIFIIFIVNRMGP). Residues 37–355 (RNYNYKQIGT…MSRNGSIISK (319 aa)) lie on the Lumenal side of the membrane. N-linked (GlcNAc...) asparagine glycosylation is found at asparagine 92, asparagine 311, and asparagine 349.

It belongs to the glycosyltransferase 11 family. Expression is restricted to the 20 intestinal cells in larvae and adult.

The protein localises to the golgi apparatus. It is found in the golgi stack membrane. It functions in the pathway protein modification; protein glycosylation. In terms of biological role, selectively catalyzes the addition of fucose in alpha 1-2 linkage to Gal-beta-(1-&gt;4)-Xyl-beta-R, Gal-beta-(1-&gt;6)-GlcNAc-R, Gal-beta-(1-&gt;3)-Gal-beta-(1-&gt;4)-Glc and Gal-beta-(1-&gt;3)-Gal-beta-(1-&gt;4)-Xyl-R acceptors but not Gal-beta-(1-&gt;3)-GlcNAc-beta-(1-&gt;3)-Gal-beta-(1-&gt;4)-Glc. Unlike in mammals, unable to fucosylate Gal-beta-(1-&gt;4)-Glc-beta-R. The sequence is that of Galactoside 2-alpha-L-fucosyltransferase from Caenorhabditis elegans.